The chain runs to 72 residues: Large ribosomal subunit protein uL29 (72 aa).

The protein belongs to the universal ribosomal protein uL29 family.

In Prochlorococcus marinus (strain AS9601), this protein is Large ribosomal subunit protein uL29.